A 1040-amino-acid polypeptide reads, in one-letter code: Multidrug resistance protein MdtB (1040 aa).

12 consecutive transmembrane segments (helical) span residues 16-36 (FIMRPVATTLLMVAILLAGII), 347-367 (LMMAITLVVMIIYLFLRNIPA), 369-389 (IIPGVAVPLSLIGTFAVMVFL), 396-416 (LTLMALTIATGFVVDDAIVVI), 440-460 (IGFTIISLTFSLIAVLIPLLF), 472-492 (FAITLAVAILISAVVSLTLTP), 537-557 (WLTLSVALSTLLLSVLLWVFI), 863-883 (LGSTVWLIVAAVVAMYIVLGI), 888-908 (FIHPITILSTLPTAGVGALLA), 911-931 (IAGSELDVIAIIGIILLIGIV), 968-988 (ILMTTLAALLGALPLMLSTGV), and 998-1018 (IGMVGGLIVSQVLTLFTTPVI).

Belongs to the resistance-nodulation-cell division (RND) (TC 2.A.6) family. MdtB subfamily. As to quaternary structure, part of a tripartite efflux system composed of MdtA, MdtB and MdtC. MdtB forms a heteromultimer with MdtC.

The protein localises to the cell inner membrane. Its function is as follows. The MdtABC tripartite complex confers resistance against novobiocin and deoxycholate. The chain is Multidrug resistance protein MdtB from Escherichia coli O157:H7 (strain EC4115 / EHEC).